The chain runs to 162 residues: UPF0114 protein Sputw3181_3501 (162 aa).

3 consecutive transmembrane segments (helical) span residues 15-35, 53-73, and 136-156; these read IMAP…IKFF, LVLV…IVMV, and IMWY…MGYL.

Belongs to the UPF0114 family.

The protein resides in the cell membrane. The sequence is that of UPF0114 protein Sputw3181_3501 from Shewanella sp. (strain W3-18-1).